Here is a 123-residue protein sequence, read N- to C-terminus: Maintenance of telomere capping protein 3, mitochondrial (123 aa).

The transit peptide at 1-37 directs the protein to the mitochondrion; it reads MMGRNGIRLALKRSFSTYQPPVVEITNITKLWPTLRP.

It is found in the mitochondrion. Functionally, may be involved in telomere capping. This is Maintenance of telomere capping protein 3, mitochondrial (MTC3) from Saccharomyces cerevisiae (strain ATCC 204508 / S288c) (Baker's yeast).